The primary structure comprises 262 residues: Acyl-[acyl-carrier-protein]--UDP-N-acetylglucosamine O-acyltransferase (262 aa).

Belongs to the transferase hexapeptide repeat family. LpxA subfamily. As to quaternary structure, homotrimer.

Its subcellular location is the cytoplasm. The catalysed reaction is a (3R)-hydroxyacyl-[ACP] + UDP-N-acetyl-alpha-D-glucosamine = a UDP-3-O-[(3R)-3-hydroxyacyl]-N-acetyl-alpha-D-glucosamine + holo-[ACP]. The protein operates within glycolipid biosynthesis; lipid IV(A) biosynthesis; lipid IV(A) from (3R)-3-hydroxytetradecanoyl-[acyl-carrier-protein] and UDP-N-acetyl-alpha-D-glucosamine: step 1/6. In terms of biological role, involved in the biosynthesis of lipid A, a phosphorylated glycolipid that anchors the lipopolysaccharide to the outer membrane of the cell. The chain is Acyl-[acyl-carrier-protein]--UDP-N-acetylglucosamine O-acyltransferase from Pectobacterium carotovorum subsp. carotovorum (strain PC1).